A 329-amino-acid chain; its full sequence is Alpha/beta hydrolase domain-containing protein 17C (329 aa).

The tract at residues 46 to 85 is disordered; the sequence is APEQRGPGAPAPASAASTSSASAAAQPAPQQPEEGGAGPG. A compositionally biased stretch (low complexity) spans 51-79; that stretch reads GPGAPAPASAASTSSASAAAQPAPQQPEE. Residues Ser211, Asp276, and His305 each act as charge relay system in the active site.

Belongs to the AB hydrolase superfamily. ABHD17 family. In terms of processing, palmitoylated on cysteine residues located in a cysteine cluster at the N-terminus which promotes membrane localization. Palmitoylation is required for post-synaptic localization and for depalmitoylating activity towards DLG4/PSD95.

It is found in the recycling endosome membrane. Its subcellular location is the cell projection. The protein localises to the dendritic spine. It localises to the postsynaptic density membrane. The enzyme catalyses S-hexadecanoyl-L-cysteinyl-[protein] + H2O = L-cysteinyl-[protein] + hexadecanoate + H(+). Hydrolyzes fatty acids from S-acylated cysteine residues in proteins. Has depalmitoylating activity towards NRAS and DLG4/PSD95. The sequence is that of Alpha/beta hydrolase domain-containing protein 17C from Bos taurus (Bovine).